A 252-amino-acid chain; its full sequence is Urease accessory protein UreH (252 aa).

It belongs to the UreD family. In terms of assembly, ureH, UreF and UreG form a complex that acts as a GTP-hydrolysis-dependent molecular chaperone, activating the urease apoprotein by helping to assemble the nickel containing metallocenter of UreC. The UreE protein probably delivers the nickel.

Its subcellular location is the cytoplasm. In terms of biological role, required for maturation of urease via the functional incorporation of the urease nickel metallocenter. The sequence is that of Urease accessory protein UreH from Helicobacter hepaticus (strain ATCC 51449 / 3B1).